A 74-amino-acid chain; its full sequence is Large ribosomal subunit protein bL31 (74 aa).

This sequence belongs to the bacterial ribosomal protein bL31 family. Type A subfamily. Part of the 50S ribosomal subunit.

In terms of biological role, binds the 23S rRNA. The chain is Large ribosomal subunit protein bL31 from Xanthobacter autotrophicus (strain ATCC BAA-1158 / Py2).